Reading from the N-terminus, the 384-residue chain is Ribosomal RNA small subunit methyltransferase H (384 aa).

Residues 99–101, aspartate 118, tyrosine 145, aspartate 169, and glutamine 176 contribute to the S-adenosyl-L-methionine site; that span reads GGH.

The protein belongs to the methyltransferase superfamily. RsmH family.

It is found in the cytoplasm. The catalysed reaction is cytidine(1402) in 16S rRNA + S-adenosyl-L-methionine = N(4)-methylcytidine(1402) in 16S rRNA + S-adenosyl-L-homocysteine + H(+). Its function is as follows. Specifically methylates the N4 position of cytidine in position 1402 (C1402) of 16S rRNA. In Mycobacteroides abscessus (strain ATCC 19977 / DSM 44196 / CCUG 20993 / CIP 104536 / JCM 13569 / NCTC 13031 / TMC 1543 / L948) (Mycobacterium abscessus), this protein is Ribosomal RNA small subunit methyltransferase H.